A 285-amino-acid polypeptide reads, in one-letter code: 2-dehydro-3-deoxyphosphooctonate aldolase (285 aa).

It belongs to the KdsA family.

The protein resides in the cytoplasm. It catalyses the reaction D-arabinose 5-phosphate + phosphoenolpyruvate + H2O = 3-deoxy-alpha-D-manno-2-octulosonate-8-phosphate + phosphate. It participates in carbohydrate biosynthesis; 3-deoxy-D-manno-octulosonate biosynthesis; 3-deoxy-D-manno-octulosonate from D-ribulose 5-phosphate: step 2/3. Its pathway is bacterial outer membrane biogenesis; lipopolysaccharide biosynthesis. This is 2-dehydro-3-deoxyphosphooctonate aldolase from Variovorax paradoxus (strain S110).